The primary structure comprises 190 residues: Guanylate kinase (190 aa).

A Guanylate kinase-like domain is found at 8–188 (GRLVILAGPS…AVSAIKAVLL (181 aa)). An ATP-binding site is contributed by 15–22 (GPSAVGKS).

This sequence belongs to the guanylate kinase family.

Its subcellular location is the cytoplasm. It catalyses the reaction GMP + ATP = GDP + ADP. Functionally, essential for recycling GMP and indirectly, cGMP. The chain is Guanylate kinase from Corynebacterium efficiens (strain DSM 44549 / YS-314 / AJ 12310 / JCM 11189 / NBRC 100395).